The sequence spans 134 residues: MPADLSGTWNLLSSDNFEGYMLALGIDFATRKIAKLLKPQKVIEQNGDSFTIQTCSSLRNYLVKFKVGEEFEEDNKGLDNRKCTSLVTWENDKLTCVQRGEKKNRGWSHWIEGDQLHLEMFCEGQVCKQTFQRA.

Belongs to the calycin superfamily. Fatty-acid binding protein (FABP) family. In terms of tissue distribution, highly expressed in white adipose tissue and mammary gland.

It is found in the cytoplasm. Its function is as follows. Intracellular transport of retinol. The chain is Retinoid-binding protein 7 (Rbp7) from Mus musculus (Mouse).